Consider the following 320-residue polypeptide: Ribose-phosphate pyrophosphokinase 1 (320 aa).

Residues 39-41 and 98-99 each bind ATP; these read DGE and RQ. Mg(2+) is bound by residues His-132 and Asp-173. Residue Lys-196 is part of the active site. Residues Arg-198, Asp-224, and 228–232 each bind D-ribose 5-phosphate; that span reads DTAGT.

Belongs to the ribose-phosphate pyrophosphokinase family. Class I subfamily. As to quaternary structure, homohexamer. It depends on Mg(2+) as a cofactor.

It is found in the cytoplasm. It carries out the reaction D-ribose 5-phosphate + ATP = 5-phospho-alpha-D-ribose 1-diphosphate + AMP + H(+). It functions in the pathway metabolic intermediate biosynthesis; 5-phospho-alpha-D-ribose 1-diphosphate biosynthesis; 5-phospho-alpha-D-ribose 1-diphosphate from D-ribose 5-phosphate (route I): step 1/1. Involved in the biosynthesis of the central metabolite phospho-alpha-D-ribosyl-1-pyrophosphate (PRPP) via the transfer of pyrophosphoryl group from ATP to 1-hydroxyl of ribose-5-phosphate (Rib-5-P). The chain is Ribose-phosphate pyrophosphokinase 1 from Streptococcus pyogenes serotype M1.